A 402-amino-acid chain; its full sequence is CCA-adding enzyme (402 aa).

ATP contacts are provided by G32 and R35. Residues G32 and R35 each contribute to the CTP site. Positions 45 and 47 each coordinate Mg(2+). ATP is bound by residues R116, D159, R162, R165, and R168. Residues R116, D159, R162, R165, and R168 each coordinate CTP.

Belongs to the tRNA nucleotidyltransferase/poly(A) polymerase family. Bacterial CCA-adding enzyme type 3 subfamily. Homodimer. Requires Mg(2+) as cofactor.

The catalysed reaction is a tRNA precursor + 2 CTP + ATP = a tRNA with a 3' CCA end + 3 diphosphate. It catalyses the reaction a tRNA with a 3' CCA end + 2 CTP + ATP = a tRNA with a 3' CCACCA end + 3 diphosphate. In terms of biological role, catalyzes the addition and repair of the essential 3'-terminal CCA sequence in tRNAs without using a nucleic acid template. Adds these three nucleotides in the order of C, C, and A to the tRNA nucleotide-73, using CTP and ATP as substrates and producing inorganic pyrophosphate. tRNA 3'-terminal CCA addition is required both for tRNA processing and repair. Also involved in tRNA surveillance by mediating tandem CCA addition to generate a CCACCA at the 3' terminus of unstable tRNAs. While stable tRNAs receive only 3'-terminal CCA, unstable tRNAs are marked with CCACCA and rapidly degraded. This is CCA-adding enzyme from Streptococcus pyogenes serotype M1.